The chain runs to 250 residues: NADH-quinone oxidoreductase subunit B 2 (250 aa).

Positions 41, 42, 107, and 137 each coordinate [4Fe-4S] cluster.

It belongs to the complex I 20 kDa subunit family. NDH-1 is composed of 14 different subunits. Subunits NuoB, C, D, E, F, and G constitute the peripheral sector of the complex. It depends on [4Fe-4S] cluster as a cofactor.

The protein resides in the cell membrane. The catalysed reaction is a quinone + NADH + 5 H(+)(in) = a quinol + NAD(+) + 4 H(+)(out). Its function is as follows. NDH-1 shuttles electrons from NADH, via FMN and iron-sulfur (Fe-S) centers, to quinones in the respiratory chain. The immediate electron acceptor for the enzyme in this species is believed to be ubiquinone. Couples the redox reaction to proton translocation (for every two electrons transferred, four hydrogen ions are translocated across the cytoplasmic membrane), and thus conserves the redox energy in a proton gradient. In Herpetosiphon aurantiacus (strain ATCC 23779 / DSM 785 / 114-95), this protein is NADH-quinone oxidoreductase subunit B 2.